Here is a 115-residue protein sequence, read N- to C-terminus: MHEMGIAMQIVEIAGGAIPSGIENPSVAKVNIRVGKLTAVVPTSLTFCFNIATQDTPLAGAELVIEEVPVVARCKQCGHEWIITGPDFSCETCRAGEVDILSGRELDIVSIELKE.

Residue His2 participates in Ni(2+) binding. Zn(2+) is bound by residues Cys74, Cys77, Cys90, and Cys93.

The protein belongs to the HypA/HybF family.

Its function is as follows. Involved in the maturation of [NiFe] hydrogenases. Required for nickel insertion into the metal center of the hydrogenase. The sequence is that of Hydrogenase maturation factor HypA from Desulfosudis oleivorans (strain DSM 6200 / JCM 39069 / Hxd3) (Desulfococcus oleovorans).